A 385-amino-acid chain; its full sequence is Tryptophan--tRNA ligase (385 aa).

Positions 89–98 (PSSKTMHIGH) match the 'HIGH' region motif. Residues 268–272 (KMSAS) carry the 'KMSKS' region motif.

It belongs to the class-I aminoacyl-tRNA synthetase family. Homodimer.

It carries out the reaction tRNA(Trp) + L-tryptophan + ATP = L-tryptophyl-tRNA(Trp) + AMP + diphosphate + H(+). The sequence is that of Tryptophan--tRNA ligase from Encephalitozoon cuniculi (strain GB-M1) (Microsporidian parasite).